The following is a 472-amino-acid chain: Sarcalumenin (472 aa).

An N-terminal signal peptide occupies residues M1–A20. An N-linked (GlcNAc...) asparagine glycan is attached at L59. The Dynamin-type G domain occupies I89–A330. Residues G99–S106 form a G1 motif region. Positions E127 to P128 are G2 motif. Positions D189–G192 are G3 motif. The G4 motif stretch occupies residues N254–D257. L278 is a region of interest (G5 motif). N-linked (GlcNAc...) asparagine glycans are attached at residues N280 and N388.

Belongs to the TRAFAC class dynamin-like GTPase superfamily. Dynamin/Fzo/YdjA family. Post-translationally, N-glycosylated.

It is found in the sarcoplasmic reticulum lumen. The protein resides in the sarcoplasmic reticulum membrane. This chain is Sarcalumenin (SRL), found in Gallus gallus (Chicken).